The sequence spans 75 residues: Small ribosomal subunit protein bS18 (75 aa).

This sequence belongs to the bacterial ribosomal protein bS18 family. Part of the 30S ribosomal subunit. Forms a tight heterodimer with protein bS6.

Its function is as follows. Binds as a heterodimer with protein bS6 to the central domain of the 16S rRNA, where it helps stabilize the platform of the 30S subunit. In Legionella pneumophila (strain Paris), this protein is Small ribosomal subunit protein bS18.